The sequence spans 596 residues: Elongation factor 4 (596 aa).

Residues 2-183 (KNIRNFSIIA…AIVRRVPAPD (182 aa)) enclose the tr-type G domain. GTP is bound by residues 14–19 (DHGKST) and 130–133 (NKID).

It belongs to the TRAFAC class translation factor GTPase superfamily. Classic translation factor GTPase family. LepA subfamily.

The protein localises to the cell inner membrane. It carries out the reaction GTP + H2O = GDP + phosphate + H(+). Required for accurate and efficient protein synthesis under certain stress conditions. May act as a fidelity factor of the translation reaction, by catalyzing a one-codon backward translocation of tRNAs on improperly translocated ribosomes. Back-translocation proceeds from a post-translocation (POST) complex to a pre-translocation (PRE) complex, thus giving elongation factor G a second chance to translocate the tRNAs correctly. Binds to ribosomes in a GTP-dependent manner. The chain is Elongation factor 4 from Campylobacter curvus (strain 525.92).